Consider the following 226-residue polypeptide: UPF0758 protein PsycPRwf_0491 (226 aa).

An MPN domain is found at Ser102–Ala224. Positions 173, 175, and 186 each coordinate Zn(2+). The JAMM motif motif lies at His173–Asp186.

It belongs to the UPF0758 family.

This chain is UPF0758 protein PsycPRwf_0491, found in Psychrobacter sp. (strain PRwf-1).